The chain runs to 260 residues: Cytosolic Fe-S cluster assembly factor Nubp2 homolog (260 aa).

14–21 contributes to the ATP binding site; the sequence is GKGGVGKS. [4Fe-4S] cluster is bound by residues Cys188 and Cys191.

It belongs to the Mrp/NBP35 ATP-binding proteins family. NUBP2/CFD1 subfamily. Heterotetramer of 2 Nubp1 and 2 Nubp2 chains. Requires [4Fe-4S] cluster as cofactor.

The protein resides in the cytoplasm. Its function is as follows. Component of the cytosolic iron-sulfur (Fe/S) protein assembly (CIA) machinery. Required for maturation of extramitochondrial Fe-S proteins. The Nubp1-Nubp2 heterotetramer forms a Fe-S scaffold complex, mediating the de novo assembly of an Fe-S cluster and its transfer to target apoproteins. This Drosophila simulans (Fruit fly) protein is Cytosolic Fe-S cluster assembly factor Nubp2 homolog.